We begin with the raw amino-acid sequence, 764 residues long: Probable glutamate--tRNA ligase, cytoplasmic (764 aa).

Residue 228–230 (RFP) participates in L-glutamate binding. The 'HIGH' region signature appears at 233–242 (PSGYMHIGHC). Residue H238 participates in ATP binding. L-glutamate is bound by residues D264, 404–408 (YDFAC), and R422. ATP is bound by residues E425 and 460–464 (LLSKR). The 'KMSKS' region motif lies at 460 to 464 (LLSKR).

It belongs to the class-I aminoacyl-tRNA synthetase family. Glutamate--tRNA ligase type 2 subfamily.

It localises to the cytoplasm. It catalyses the reaction tRNA(Glu) + L-glutamate + ATP = L-glutamyl-tRNA(Glu) + AMP + diphosphate. Catalyzes the attachment of glutamate to tRNA(Glu) in a two-step reaction: glutamate is first activated by ATP to form Glu-AMP and then transferred to the acceptor end of tRNA(Glu). The chain is Probable glutamate--tRNA ligase, cytoplasmic (gluS) from Dictyostelium discoideum (Social amoeba).